Consider the following 292-residue polypeptide: Nucleotide-binding protein Ldb0621 (292 aa).

Residue 14–21 (GMSGAGKT) participates in ATP binding. 64 to 67 (DLRV) contributes to the GTP binding site.

This sequence belongs to the RapZ-like family.

Displays ATPase and GTPase activities. This chain is Nucleotide-binding protein Ldb0621, found in Lactobacillus delbrueckii subsp. bulgaricus (strain ATCC 11842 / DSM 20081 / BCRC 10696 / JCM 1002 / NBRC 13953 / NCIMB 11778 / NCTC 12712 / WDCM 00102 / Lb 14).